Reading from the N-terminus, the 662-residue chain is Transketolase (662 aa).

His28 contributes to the substrate binding site. Thiamine diphosphate-binding positions include His68 and 115–117 (GPL). Asp156 is a Mg(2+) binding site. The thiamine diphosphate site is built by Gly157 and Asn186. Mg(2+) is bound by residues Asn186 and Ile188. Residues His261, Arg356, and Ser383 each coordinate substrate. His261 contacts thiamine diphosphate. Glu410 serves as the catalytic Proton donor. Phe436 is a thiamine diphosphate binding site. Residues His460, Asp468, and Arg519 each contribute to the substrate site.

The protein belongs to the transketolase family. Homodimer. Mg(2+) is required as a cofactor. The cofactor is Ca(2+). Mn(2+) serves as cofactor. It depends on Co(2+) as a cofactor. Requires thiamine diphosphate as cofactor.

The catalysed reaction is D-sedoheptulose 7-phosphate + D-glyceraldehyde 3-phosphate = aldehydo-D-ribose 5-phosphate + D-xylulose 5-phosphate. Its pathway is carbohydrate biosynthesis; Calvin cycle. The protein operates within carbohydrate degradation; pentose phosphate pathway. In terms of biological role, catalyzes the transfer of a two-carbon ketol group from a ketose donor to an aldose acceptor, via a covalent intermediate with the cofactor thiamine pyrophosphate. In Staphylococcus epidermidis (strain ATCC 35984 / DSM 28319 / BCRC 17069 / CCUG 31568 / BM 3577 / RP62A), this protein is Transketolase (tkt).